Reading from the N-terminus, the 376-residue chain is tRNA-specific 2-thiouridylase MnmA (376 aa).

Residues 9–16 and Met35 contribute to the ATP site; that span reads AMSGGIDS. Residue Cys105 is the Nucleophile of the active site. Cys105 and Cys202 are oxidised to a cystine. An ATP-binding site is contributed by Gly129. The segment at 151–153 is interaction with tRNA; that stretch reads KDQ. Cys202 functions as the Cysteine persulfide intermediate in the catalytic mechanism. Residues 312–313 form an interaction with tRNA region; that stretch reads RY.

Belongs to the MnmA/TRMU family.

It localises to the cytoplasm. The catalysed reaction is S-sulfanyl-L-cysteinyl-[protein] + uridine(34) in tRNA + AH2 + ATP = 2-thiouridine(34) in tRNA + L-cysteinyl-[protein] + A + AMP + diphosphate + H(+). In terms of biological role, catalyzes the 2-thiolation of uridine at the wobble position (U34) of tRNA, leading to the formation of s(2)U34. The polypeptide is tRNA-specific 2-thiouridylase MnmA (Amoebophilus asiaticus (strain 5a2)).